A 970-amino-acid polypeptide reads, in one-letter code: Serine/threonine-protein kinase PLK4 (970 aa).

The region spanning 12–265 is the Protein kinase domain; that stretch reads FKVGNLLGKG…LSSVLDHPFM (254 aa). ATP contacts are provided by residues 18–26 and Lys41; that span reads LGKGSFAGV. 2 positions are modified to N6-acetyllysine: Lys45 and Lys46. Asp136 acts as the Proton acceptor in catalysis. 2 disordered regions span residues 323 to 458 and 497 to 538; these read TVFP…NHLC and SISP…HSVK. Positions 328-356 are enriched in polar residues; the sequence is NKSSTDFSSSGDGNSFYTQWGNQETSNSG. Over residues 360–369 the composition is skewed to basic and acidic residues; sequence VIQDAEERPH. Residues 379–393 are compositionally biased toward polar residues; it reads SDRSGTSNSQSQAKT. A Phosphoserine modification is found at Ser401. Polar residues predominate over residues 438-454; sequence SSSSGSFERPDNNQALS. Over residues 504 to 515 the composition is skewed to basic and acidic residues; sequence FQGHPDLQKDTS. Positions 586–699 constitute a Cryptic POLO box 1 (CPB1) domain; the sequence is TLRSITSPLV…SRFVQLVRSK (114 aa). Phosphoserine is present on Ser665. The Cryptic POLO box 2 (CPB2) domain occupies 700–813; that stretch reads SPKITYFTRY…GRKPGSTSSP (114 aa). A disordered region spans residues 808 to 828; that stretch reads GSTSSPKALSPPPSVDSNYPT. At Ser817 the chain carries Phosphoserine. One can recognise a POLO box domain in the interval 886–964; that stretch reads QLLKSVFVKN…LSSILLMFSN (79 aa).

Belongs to the protein kinase superfamily. Ser/Thr protein kinase family. CDC5/Polo subfamily. In terms of assembly, homodimer. Interacts with CEP152 (via N-terminus). Interacts with CEP78; this interaction may be important for proper PLK4 localization to the centriole and PLK4-induced overduplication of centrioles. Interacts with CEP131. Interacts simultaneously with TENT5C and CEP192. Interacts with TENT5C; this interaction leads to the TENT5C recruitment in the centrosome. Interacts with CEP85; this interaction may be important in cell migration and centriole assembly. Acetylation by KAT2A and KAT2B impairs kinase activity by shifting the kinase to an inactive conformation. Post-translationally, ubiquitinated; leading to its degradation by the proteasome. Deubiquitinated by USP54; leading to PLK4 stabilization. In terms of processing, tyrosine-phosphorylated by TEC.

It is found in the cytoplasm. It localises to the cytoskeleton. The protein localises to the microtubule organizing center. The protein resides in the centrosome. Its subcellular location is the centriole. It is found in the nucleus. It localises to the nucleolus. The protein localises to the cleavage furrow. It catalyses the reaction L-seryl-[protein] + ATP = O-phospho-L-seryl-[protein] + ADP + H(+). The catalysed reaction is L-threonyl-[protein] + ATP = O-phospho-L-threonyl-[protein] + ADP + H(+). Its function is as follows. Serine/threonine-protein kinase that plays a central role in centriole duplication. Able to trigger procentriole formation on the surface of the parental centriole cylinder, leading to the recruitment of centriole biogenesis proteins such as SASS6, CPAP, CCP110, CEP135 and gamma-tubulin. When overexpressed, it is able to induce centrosome amplification through the simultaneous generation of multiple procentrioles adjoining each parental centriole during S phase. Phosphorylates 'Ser-151' of FBXW5 during the G1/S transition, leading to inhibit FBXW5 ability to ubiquitinate SASS6. Its central role in centriole replication suggests a possible role in tumorigenesis, centrosome aberrations being frequently observed in tumors. Also involved in deuterosome-mediated centriole amplification in multiciliated that can generate more than 100 centrioles. Also involved in trophoblast differentiation by phosphorylating HAND1, leading to disrupt the interaction between HAND1 and MDFIC and activate HAND1. Phosphorylates CDC25C and CHEK2. Required for the recruitment of STIL to the centriole and for STIL-mediated centriole amplification. Phosphorylates CEP131 at 'Ser-78' and PCM1 at 'Ser-372' which is essential for proper organization and integrity of centriolar satellites. This is Serine/threonine-protein kinase PLK4 from Homo sapiens (Human).